Reading from the N-terminus, the 311-residue chain is Formimidoylglutamase (311 aa).

Histidine 130, aspartate 155, histidine 157, aspartate 159, cysteine 242, and aspartate 244 together coordinate Mn(2+).

Belongs to the arginase family. The cofactor is Mn(2+).

The enzyme catalyses N-formimidoyl-L-glutamate + H2O = formamide + L-glutamate. Its pathway is amino-acid degradation; L-histidine degradation into L-glutamate; L-glutamate from N-formimidoyl-L-glutamate (hydrolase route): step 1/1. Catalyzes the conversion of N-formimidoyl-L-glutamate to L-glutamate and formamide. This Staphylococcus epidermidis (strain ATCC 35984 / DSM 28319 / BCRC 17069 / CCUG 31568 / BM 3577 / RP62A) protein is Formimidoylglutamase.